Reading from the N-terminus, the 449-residue chain is Putative F-box/FBD/LRR-repeat protein At5g62970 (449 aa).

Residues 2–50 (DKISGFSDDELLVKILSFLPFKFAITTSVLSKQWKFLWMRVPKLEYDED) enclose the F-box domain. 6 LRR repeats span residues 27-52 (TTSV…EDSM), 81-107 (GHRM…RLKF), 158-185 (TLKL…HLER), 186-211 (VTYG…VVEL), 252-279 (YFKL…NITA), and 328-354 (IHNA…EFDE). Residues 368 to 418 (FWNQPNSVPQCLLSTLQTFEWSGYPGSVQGKDLATYILRKSRQLKIATISI) form the FBD domain.

This Arabidopsis thaliana (Mouse-ear cress) protein is Putative F-box/FBD/LRR-repeat protein At5g62970.